Consider the following 116-residue polypeptide: uncharacterized protein (116 aa).

This is an uncharacterized protein from Bacillus subtilis (strain 168).